The primary structure comprises 391 residues: GTPase Obg (391 aa).

Residues 1–159 (MQFVDEATID…RRLRLELKVL (159 aa)) enclose the Obg domain. One can recognise an OBG-type G domain in the interval 160–333 (ADVGLLGMPN…LVYALMNAIE (174 aa)). GTP-binding positions include 166 to 173 (GMPNAGKS), 191 to 195 (FTTLI), 213 to 216 (DIPG), 283 to 286 (NKID), and 314 to 316 (SAA). 2 residues coordinate Mg(2+): serine 173 and threonine 193. The span at 367-377 (LKAEARQARQN) shows a compositional bias: basic and acidic residues. The tract at residues 367–391 (LKAEARQARQNDDDDDHDVEVVYEP) is disordered. Over residues 378–391 (DDDDDHDVEVVYEP) the composition is skewed to acidic residues.

Belongs to the TRAFAC class OBG-HflX-like GTPase superfamily. OBG GTPase family. In terms of assembly, monomer. Mg(2+) is required as a cofactor.

It is found in the cytoplasm. Its function is as follows. An essential GTPase which binds GTP, GDP and possibly (p)ppGpp with moderate affinity, with high nucleotide exchange rates and a fairly low GTP hydrolysis rate. Plays a role in control of the cell cycle, stress response, ribosome biogenesis and in those bacteria that undergo differentiation, in morphogenesis control. The protein is GTPase Obg of Alcanivorax borkumensis (strain ATCC 700651 / DSM 11573 / NCIMB 13689 / SK2).